We begin with the raw amino-acid sequence, 126 residues long: Small ribosomal subunit protein uS13 (126 aa).

The disordered stretch occupies residues 95 to 126 (GLPVRGQQTRTNARTRKGKRKTVGGTKKAKAK). Residues 107 to 126 (ARTRKGKRKTVGGTKKAKAK) are compositionally biased toward basic residues.

Belongs to the universal ribosomal protein uS13 family. In terms of assembly, part of the 30S ribosomal subunit. Forms a loose heterodimer with protein S19. Forms two bridges to the 50S subunit in the 70S ribosome.

Its function is as follows. Located at the top of the head of the 30S subunit, it contacts several helices of the 16S rRNA. In the 70S ribosome it contacts the 23S rRNA (bridge B1a) and protein L5 of the 50S subunit (bridge B1b), connecting the 2 subunits; these bridges are implicated in subunit movement. Contacts the tRNAs in the A and P-sites. The chain is Small ribosomal subunit protein uS13 from Aquifex aeolicus (strain VF5).